Consider the following 37-residue polypeptide: Large ribosomal subunit protein bL36A (37 aa).

Belongs to the bacterial ribosomal protein bL36 family.

The protein is Large ribosomal subunit protein bL36A of Haemophilus ducreyi (strain 35000HP / ATCC 700724).